The primary structure comprises 120 residues: Aspartate 1-decarboxylase (120 aa).

The active-site Schiff-base intermediate with substrate; via pyruvic acid is Ser25. Ser25 bears the Pyruvic acid (Ser) mark. Residue Thr57 participates in substrate binding. Tyr58 (proton donor) is an active-site residue. 73–75 (GAA) contacts substrate.

Belongs to the PanD family. Heterooctamer of four alpha and four beta subunits. The cofactor is pyruvate. Is synthesized initially as an inactive proenzyme, which is activated by self-cleavage at a specific serine bond to produce a beta-subunit with a hydroxyl group at its C-terminus and an alpha-subunit with a pyruvoyl group at its N-terminus.

Its subcellular location is the cytoplasm. It catalyses the reaction L-aspartate + H(+) = beta-alanine + CO2. Its pathway is cofactor biosynthesis; (R)-pantothenate biosynthesis; beta-alanine from L-aspartate: step 1/1. Functionally, catalyzes the pyruvoyl-dependent decarboxylation of aspartate to produce beta-alanine. In Methylibium petroleiphilum (strain ATCC BAA-1232 / LMG 22953 / PM1), this protein is Aspartate 1-decarboxylase.